We begin with the raw amino-acid sequence, 112 residues long: UstYa family oxidase VicYb (112 aa).

2 short sequence motifs (HXXHC) span residues histidine 9–cysteine 13 and histidine 36–cysteine 40.

The protein belongs to the ustYa family.

Its pathway is mycotoxin biosynthesis. In terms of biological role, ustYa family oxidase, part of the gene cluster that mediates the biosynthesis of the secondary metabolite victorin, the molecular basis for Victoria blight of oats. Within the pathway, vicYb catalyzes the oxidative cyclization of the core peptide. The pathway starts with the processing of the precursor vicA1 by several endopeptidases including kexin proteases as well as the cluster-specific S28 family peptidases vicPa and vicPb to produce 7 identical copies of the hexapeptide Gly-Leu-Lys-Leu-Ala-Phe. After being excised from the precursor peptide, the core peptides are cyclized and modified post-translationally by enzymes encoded within the gene cluster. The ustYa family oxidase vicYb is required for the formation of the macrocycle in victorin and the copper amine oxidases (CAOs) vicK1 and vicK2 are responsible for converting victorin to the active form by oxidizing the N-terminal glycyl residue in the peptides to glyoxylate. Relaxed substrate specificity of enzymes in the victorin biosynthetic pathway results in a metabolic grid that produces a set of analogs including victorinines B, C, E or HV-toxin M. In Bipolaris victoriae (strain FI3) (Victoria blight of oats agent), this protein is UstYa family oxidase VicYb.